The primary structure comprises 887 residues: Centrobin (887 aa).

The interval 1–34 (MATAAPSPSSPLRPEDLLSDSSEPPGLNQVSSEV) is disordered. Position 81 is a phosphoserine (serine 81). Disordered stretches follow at residues 110 to 153 (MLHT…PSSS), 465 to 486 (SLRQAASLRDHHRKQLQELSGQ), 566 to 591 (TLLPPNPQAPLAEPSSPGPLEPEKGE), and 636 to 695 (LGPP…LPPA). Over residues 113–128 (TSRDTAYRTGSERREE) the composition is skewed to basic and acidic residues. Residues 133-153 (SDSTATLLNTRPLQDLSPSSS) are compositionally biased toward polar residues. The stretch at 191–557 (RRKHCERHIQ…LQAMLQAHWE (367 aa)) forms a coiled coil. The interval 360–887 (QEHQLKERLQ…SMRSRGGIWR (528 aa)) is required for centrosome localization. A compositionally biased stretch (basic and acidic residues) spans 670 to 680 (TDDHRAERPFP). The residue at position 782 (serine 782) is a Phosphoserine. A disordered region spans residues 824–887 (GTDGQGELVP…SMRSRGGIWR (64 aa)). Residues 832 to 849 (VPRRNTDSRLGETTRKEI) are compositionally biased toward basic and acidic residues.

As to quaternary structure, interacts with LYST.

It is found in the cytoplasm. The protein resides in the cytoskeleton. The protein localises to the microtubule organizing center. Its subcellular location is the centrosome. It localises to the centriole. Functionally, required for centriole duplication. Inhibition of centriole duplication leading to defects in cytokinesis. The sequence is that of Centrobin (Cntrob) from Mus musculus (Mouse).